We begin with the raw amino-acid sequence, 502 residues long: D-erythritol 1-phosphate dehydrogenase (502 aa).

Position 8–36 (8–36 (DLFVIGGGINGAGVARDAAGRGLKVVLAE)) interacts with FAD.

This sequence belongs to the FAD-dependent glycerol-3-phosphate dehydrogenase family. Requires FAD as cofactor.

It catalyses the reaction D-erythritol 1-phosphate + NADP(+) = D-erythrulose 1-phosphate + NADPH + H(+). It functions in the pathway carbohydrate metabolism; erythritol degradation. Catalyzes the oxydation of D-erythritol 1-phosphate to D-erythrulose 1-phosphate. This Brucella abortus (strain 2308) protein is D-erythritol 1-phosphate dehydrogenase.